We begin with the raw amino-acid sequence, 240 residues long: Nuclear receptor-interacting protein 3 (240 aa).

In Pongo abelii (Sumatran orangutan), this protein is Nuclear receptor-interacting protein 3 (NRIP3).